Here is a 172-residue protein sequence, read N- to C-terminus: S-ribosylhomocysteine lyase (172 aa).

H54, H58, and C128 together coordinate Fe cation.

This sequence belongs to the LuxS family. Homodimer. The cofactor is Fe cation.

The enzyme catalyses S-(5-deoxy-D-ribos-5-yl)-L-homocysteine = (S)-4,5-dihydroxypentane-2,3-dione + L-homocysteine. In terms of biological role, involved in the synthesis of autoinducer 2 (AI-2) which is secreted by bacteria and is used to communicate both the cell density and the metabolic potential of the environment. The regulation of gene expression in response to changes in cell density is called quorum sensing. Catalyzes the transformation of S-ribosylhomocysteine (RHC) to homocysteine (HC) and 4,5-dihydroxy-2,3-pentadione (DPD). This chain is S-ribosylhomocysteine lyase, found in Vibrio vulnificus (strain CMCP6).